Here is a 1183-residue protein sequence, read N- to C-terminus: DNA-directed RNA polymerase subunit beta (1183 aa).

Residues Ala1155–Asp1183 are disordered.

It belongs to the RNA polymerase beta chain family. In terms of assembly, the RNAP catalytic core consists of 2 alpha, 1 beta, 1 beta' and 1 omega subunit. When a sigma factor is associated with the core the holoenzyme is formed, which can initiate transcription.

The enzyme catalyses RNA(n) + a ribonucleoside 5'-triphosphate = RNA(n+1) + diphosphate. Its function is as follows. DNA-dependent RNA polymerase catalyzes the transcription of DNA into RNA using the four ribonucleoside triphosphates as substrates. This is DNA-directed RNA polymerase subunit beta from Staphylococcus carnosus (strain TM300).